We begin with the raw amino-acid sequence, 129 residues long: Acetophenone carboxylase beta subunit (129 aa).

In terms of assembly, acetophenone carboxylase consists of five subunits; a heterooctameric subcomplex of two alpha (Apc1), two beta (Apc2), two gamma (Apc3) and two delta (Apc4) subunits assembles with the epsilon (Apc5) subunit in an unknown stoichiometry. Mg(2+) serves as cofactor. Mn(2+) is required as a cofactor.

The protein resides in the cytoplasm. It carries out the reaction acetophenone + hydrogencarbonate + 2 ATP + H2O = 3-oxo-3-phenylpropanoate + 2 ADP + 2 phosphate + 2 H(+). Inhibited by zinc ions, carbamoylphosphate and beta,gamma-imido-ATP. In terms of biological role, catalyzes the carboxylation of acetophenone to form 3-oxo-3-phenylpropanoate (benzoylacetate) in the anaerobic catabolism of ethylbenzene. Also carboxylates propiophenone at the same rate and 4-acetyl-pyridine at lower rates. The sequence is that of Acetophenone carboxylase beta subunit (apc2) from Aromatoleum aromaticum (strain DSM 19018 / LMG 30748 / EbN1) (Azoarcus sp. (strain EbN1)).